Consider the following 93-residue polypeptide: SH3 domain-binding glutamic acid-rich-like protein 3 (93 aa).

S2 bears the N-acetylserine mark. One can recognise a Glutaredoxin domain in the interval 2-93 (SGLRVYSTSV…NTLQEFLKLA (92 aa)). The O-linked (GalNAc...) threonine glycan is linked to T9.

The protein belongs to the SH3BGR family. Interacts with MYO1C (via its IQ motifs); the interaction is dependent on calcium and takes place at membrane ruffles. May be glycosylated. Expressed in heart, liver, lung, kidney, spleen, thymus, ovarian follicles, skeletal muscle, brain, lymph node and mammary epithelial and stromal cells (at protein level).

Its subcellular location is the cytoplasm. It localises to the cytosol. The protein resides in the cell projection. It is found in the ruffle membrane. The protein localises to the nucleus. Functionally, could act as a modulator of glutaredoxin biological activity. May play a role in cytoskeleton organization. The sequence is that of SH3 domain-binding glutamic acid-rich-like protein 3 from Rattus norvegicus (Rat).